We begin with the raw amino-acid sequence, 257 residues long: Protein MoaE (257 aa).

Residue 6-29 (VITGGGTGIGAACARLMHPAGERV) participates in NAD(+) binding. The segment at 75-96 (LMSSSAAPAGWATAPPPRPATA) is disordered. Ser-132 serves as a coordination point for substrate. Catalysis depends on Tyr-145, which acts as the Proton acceptor.

It belongs to the short-chain dehydrogenases/reductases (SDR) family.

In terms of biological role, might catalyze the conversion of monoamine compounds or their metabolites. The polypeptide is Protein MoaE (moaE) (Klebsiella aerogenes (Enterobacter aerogenes)).